We begin with the raw amino-acid sequence, 133 residues long: ATP synthase epsilon chain, chloroplastic (133 aa).

Belongs to the ATPase epsilon chain family. In terms of assembly, F-type ATPases have 2 components, CF(1) - the catalytic core - and CF(0) - the membrane proton channel. CF(1) has five subunits: alpha(3), beta(3), gamma(1), delta(1), epsilon(1). CF(0) has three main subunits: a, b and c.

Its subcellular location is the plastid. The protein resides in the chloroplast thylakoid membrane. In terms of biological role, produces ATP from ADP in the presence of a proton gradient across the membrane. This chain is ATP synthase epsilon chain, chloroplastic, found in Lotus japonicus (Lotus corniculatus var. japonicus).